The sequence spans 244 residues: Ureidoacrylate amidohydrolase RutB (244 aa).

Residue aspartate 38 is the Proton acceptor of the active site. The active site involves lysine 147. Cysteine 180 serves as the catalytic Nucleophile.

This sequence belongs to the isochorismatase family. RutB subfamily.

The enzyme catalyses (Z)-3-ureidoacrylate + H2O + H(+) = (Z)-3-aminoacrylate + NH4(+) + CO2. It catalyses the reaction (Z)-3-ureidoacrylate + H2O = (Z)-3-aminoacrylate + carbamate + H(+). The catalysed reaction is (Z)-2-methylureidoacrylate + H2O + H(+) = (Z)-2-methylaminoacrylate + NH4(+) + CO2. In terms of biological role, hydrolyzes ureidoacrylate to form aminoacrylate and carbamate. The carbamate hydrolyzes spontaneously, thereby releasing one of the nitrogen atoms of the pyrimidine ring as ammonia and one of its carbon atoms as CO2. This chain is Ureidoacrylate amidohydrolase RutB, found in Shigella flexneri serotype X (strain 2002017).